We begin with the raw amino-acid sequence, 240 residues long: Glutathione S-transferase theta-1 (240 aa).

The GST N-terminal domain occupies 2 to 82; the sequence is VLELYLDLLS…YLAHKYKVPD (81 aa). Glutathione is bound by residues His-40, 53 to 54, and 66 to 67; these read KV and ES. The GST C-terminal domain maps to 88–223; the sequence is DLQARARVDE…ILKVRDCPPA (136 aa).

The protein belongs to the GST superfamily. Theta family. As to quaternary structure, homodimer. As to expression, in liver, highest expression found in central vein limiting plate hepatocytes. In lung, expressed mainly in club cells of the bronchiolar epithelium and, at low levels, in type II alveolar cells.

It is found in the cytoplasm. It catalyses the reaction RX + glutathione = an S-substituted glutathione + a halide anion + H(+). Functionally, conjugation of reduced glutathione to a wide number of exogenous and endogenous hydrophobic electrophiles. Also binds steroids, bilirubin, carcinogens and numerous organic anions. Has dichloromethane dehalogenase activity. The polypeptide is Glutathione S-transferase theta-1 (Gstt1) (Rattus norvegicus (Rat)).